The following is a 482-amino-acid chain: Cardiolipin synthase (482 aa).

Transmembrane regions (helical) follow at residues 4-24 and 34-54; these read LAYLLVVLLILNVFFAAVTVF and WAWLLVLTFVPIFGFIIYLIF. PLD phosphodiesterase domains are found at residues 217–244 and 395–422; these read LNYRNHRKLAIIDGDISYIGGFNIGDEY and DNGFIHAKTLVVDGEIASVGTANMDFRS. Active-site residues include His-222, Lys-224, Asp-229, His-400, Lys-402, and Asp-407.

The protein belongs to the phospholipase D family. Cardiolipin synthase subfamily.

It localises to the cell membrane. The enzyme catalyses 2 a 1,2-diacyl-sn-glycero-3-phospho-(1'-sn-glycerol) = a cardiolipin + glycerol. In terms of biological role, catalyzes the reversible phosphatidyl group transfer from one phosphatidylglycerol molecule to another to form cardiolipin (CL) (diphosphatidylglycerol) and glycerol. The protein is Cardiolipin synthase (cls) of Listeria welshimeri serovar 6b (strain ATCC 35897 / DSM 20650 / CCUG 15529 / CIP 8149 / NCTC 11857 / SLCC 5334 / V8).